The primary structure comprises 999 residues: Sarcoplasmic/endoplasmic reticulum calcium ATPase 3 (999 aa).

The residue at position 1 (methionine 1) is an N-acetylmethionine. At 1–48 (MEEAHLLSAADVLRRFSVTAEGGLTLEQVTDARERYGPNELPTEEGKS) the chain is on the cytoplasmic side. Phosphoserine is present on serine 17. Threonine 19 carries the post-translational modification Phosphothreonine. A helical membrane pass occupies residues 49–69 (LWELVVEQFEDLLVRILLLAA). The Lumenal segment spans residues 70 to 89 (LVSFVLAWFEEGEETTTAFV). A helical membrane pass occupies residues 90-110 (EPLVIMLILVANAIVGVWQER). Residues 111–253 (NAESAIEALK…PERTPLQRKL (143 aa)) lie on the Cytoplasmic side of the membrane. A helical transmembrane segment spans residues 254–273 (DEFGRQLSHAISVICVAVWV). The Lumenal segment spans residues 274–295 (INIGHFADPAHGGSWLRGAVYY). The helical transmembrane segment at 296–313 (FKIAVALAVAAIPEGLPA) threads the bilayer. Positions 304, 305, 307, and 309 each coordinate Ca(2+). Residues 314 to 757 (VITTCLALGT…EEGRAIYNNM (444 aa)) are Cytoplasmic-facing. Aspartate 351 acts as the 4-aspartylphosphate intermediate in catalysis. Aspartate 351 and threonine 353 together coordinate Mg(2+). An ATP-binding site is contributed by threonine 353. The segment at 370 to 400 (AEAEAGACRLHEFTISGTTYTPEGEVRQGEQ) is interaction with phospholamban 1. At threonine 415 the chain carries Phosphothreonine. Positions 442, 489, 515, 560, 625, 626, and 627 each coordinate ATP. At serine 662 the chain carries Phosphoserine. The ATP site is built by arginine 678 and lysine 684. Residue aspartate 703 participates in Mg(2+) binding. Asparagine 706 lines the ATP pocket. The chain crosses the membrane as a helical span at residues 758–777 (KQFIRYLISSNVGEVVCIFL). Ca(2+) is bound by residues asparagine 768 and glutamate 771. Topologically, residues 778 to 787 (TAILGLPEAL) are lumenal. The chain crosses the membrane as a helical span at residues 788-808 (IPVQLLWVNLVTDGLPATALG). Positions 788–808 (IPVQLLWVNLVTDGLPATALG) are interaction with phospholamban 2. Asparagine 796, threonine 799, and aspartate 800 together coordinate Ca(2+). Residues 809–828 (FNPPDLDIMEKLPRNPREAL) are Cytoplasmic-facing. The chain crosses the membrane as a helical span at residues 829–851 (ISGWLFFRYLAIGVYVGLATVAA). Topologically, residues 852–897 (ATWWFLYDAEGPQVTFHQLRNFLKCSEDNPLFAGIDCEVFESRFPT) are lumenal. The helical transmembrane segment at 898–917 (TMALSVLVTIEMCNALNSVS) threads the bilayer. Ca(2+) is bound at residue glutamate 908. Over 918 to 930 (ENQSLLRMPPWLN) the chain is Cytoplasmic. The helical transmembrane segment at 931–949 (PWLLGAVVMSMALHFLILL) threads the bilayer. At 950–964 (VPPLPLIFQVTPLSG) the chain is on the lumenal side. Residues 965-985 (RQWGVVLQMSLPVILLDEALK) traverse the membrane as a helical segment. Residues 986 to 999 (YLSRHHVDEKKDLK) lie on the Cytoplasmic side of the membrane.

This sequence belongs to the cation transport ATPase (P-type) (TC 3.A.3) family. Type IIA subfamily. Interacts with sarcolipin (SLN). Interacts with phospholamban (PLN). Interacts with myoregulin (MRLN). Interacts with DWORF. Interacts with VMP1. Interacts with TUNAR; the interaction occurs at low levels in low glucose conditions and is increased by high glucose levels. Requires Mg(2+) as cofactor. Found in most tissues. Most abundant in large and small intestine, spleen and lung. Also detected in PC12 cells.

The protein localises to the endoplasmic reticulum membrane. Its subcellular location is the sarcoplasmic reticulum membrane. It catalyses the reaction Ca(2+)(in) + ATP + H2O = Ca(2+)(out) + ADP + phosphate + H(+). Inhibited by sarcolipin (SLN), phospholamban (PLN) and myoregulin (MRLN). Enhanced by DWORF; DWORF increases activity by displacing sarcolipin (SLN), phospholamban (PLN) and myoregulin (MRLN). In terms of biological role, this magnesium-dependent enzyme catalyzes the hydrolysis of ATP coupled with the transport of the calcium. Transports calcium ions from the cytosol into the sarcoplasmic/endoplasmic reticulum lumen. Contributes to calcium sequestration involved in muscular excitation/contraction. This magnesium-dependent enzyme catalyzes the hydrolysis of ATP coupled with the transport of calcium. Transports calcium ions from the cytosol into the sarcoplasmic/endoplasmic reticulum lumen. Contributes to calcium sequestration involved in muscular excitation/contraction. This is Sarcoplasmic/endoplasmic reticulum calcium ATPase 3 (Atp2a3) from Rattus norvegicus (Rat).